Consider the following 74-residue polypeptide: Imcroporin (74 aa).

Positions 1–22 are cleaved as a signal peptide; sequence MKFQYLLAVFLIVLVVTDHCQA. The residue at position 39 (lysine 39) is a Lysine amide; partial. Positions 45–74 are excised as a propeptide; sequence QLEARFEPKQRNFRKRELDFEKLFANMPDY.

It belongs to the non-disulfide-bridged peptide (NDBP) superfamily. Short antimicrobial peptide (group 4) family. Expressed by the venom gland.

It is found in the secreted. It localises to the target cell membrane. In terms of biological role, has potent antibacterial activity against Gram-positive bacteria M.luteus, B.thuringiensis, S.aureus and B.subtilis, but not Gram-negative bacteria. Shows a weak cytotoxicity effect against mammalian cell lines and relatively low hemolytic activity against human erythrocytes. In Isometrus maculatus (Lesser brown scorpion), this protein is Imcroporin.